The sequence spans 307 residues: MNTQAPIKLIDGKAAAARVLAEVAEDVRALKAAGIVPALAVVLVGDDPASQVYVRNKVLRAEECGIRSLEFKLPADTAEARLQALIAELNADASVHGILVQLPLPAHIDEQRVLQAVTPLKDVDGFHAENVGGLSQGREVLTPCTPAGCLRLLQDSCGDLTGKHAVVIGRSNIVGKPMAALLLKAHCSVTVVHSKSANLKTLCRQADIVVAAVGRPRLVDADWLKPGAVVIDVGINRIDENGRSRLVGDVDFDSALPQVSAITPVPGGVGPMTIAYLMKNTLVAARLQQTAPSNLTQRAEAACPSIS.

Residues 169–171 (GRS), Ser-194, and Ile-235 each bind NADP(+).

This sequence belongs to the tetrahydrofolate dehydrogenase/cyclohydrolase family. Homodimer.

The catalysed reaction is (6R)-5,10-methylene-5,6,7,8-tetrahydrofolate + NADP(+) = (6R)-5,10-methenyltetrahydrofolate + NADPH. It catalyses the reaction (6R)-5,10-methenyltetrahydrofolate + H2O = (6R)-10-formyltetrahydrofolate + H(+). It participates in one-carbon metabolism; tetrahydrofolate interconversion. Its function is as follows. Catalyzes the oxidation of 5,10-methylenetetrahydrofolate to 5,10-methenyltetrahydrofolate and then the hydrolysis of 5,10-methenyltetrahydrofolate to 10-formyltetrahydrofolate. This Ectopseudomonas mendocina (strain ymp) (Pseudomonas mendocina) protein is Bifunctional protein FolD 3.